We begin with the raw amino-acid sequence, 225 residues long: GTP cyclohydrolase 1 (225 aa).

The segment covering M1–A12 has biased composition (basic and acidic residues). The disordered stretch occupies residues M1–E59. Composition is skewed to polar residues over residues D13–N24 and G47–V58. The Zn(2+) site is built by C149, H152, and C220.

Belongs to the GTP cyclohydrolase I family. Toroid-shaped homodecamer, composed of two pentamers of five dimers.

The protein localises to the cytoplasm. Its subcellular location is the nucleus. The catalysed reaction is GTP + H2O = 7,8-dihydroneopterin 3'-triphosphate + formate + H(+). It participates in cofactor biosynthesis; 7,8-dihydroneopterin triphosphate biosynthesis; 7,8-dihydroneopterin triphosphate from GTP: step 1/1. GTP shows a positive allosteric effect, and tetrahydrobiopterin inhibits the enzyme activity. Zinc is required for catalytic activity. Inhibited by Mg(2+). May positively regulate nitric oxide synthesis in endothelial cells. May be involved in dopamine synthesis. May modify pain sensitivity and persistence. This is GTP cyclohydrolase 1 (gch1) from Oncorhynchus mykiss (Rainbow trout).